The chain runs to 583 residues: Proline--tRNA ligase (583 aa).

It belongs to the class-II aminoacyl-tRNA synthetase family. ProS type 1 subfamily. As to quaternary structure, homodimer.

It is found in the cytoplasm. It carries out the reaction tRNA(Pro) + L-proline + ATP = L-prolyl-tRNA(Pro) + AMP + diphosphate. Functionally, catalyzes the attachment of proline to tRNA(Pro) in a two-step reaction: proline is first activated by ATP to form Pro-AMP and then transferred to the acceptor end of tRNA(Pro). As ProRS can inadvertently accommodate and process non-cognate amino acids such as alanine and cysteine, to avoid such errors it has two additional distinct editing activities against alanine. One activity is designated as 'pretransfer' editing and involves the tRNA(Pro)-independent hydrolysis of activated Ala-AMP. The other activity is designated 'posttransfer' editing and involves deacylation of mischarged Ala-tRNA(Pro). The misacylated Cys-tRNA(Pro) is not edited by ProRS. The protein is Proline--tRNA ligase of Methylococcus capsulatus (strain ATCC 33009 / NCIMB 11132 / Bath).